A 206-amino-acid chain; its full sequence is Small ribosomal subunit protein uS4 (206 aa).

The 61-residue stretch at 96-156 (GRLDNVVYRM…EKAKNQLRVK (61 aa)) folds into the S4 RNA-binding domain.

It belongs to the universal ribosomal protein uS4 family. Part of the 30S ribosomal subunit. Contacts protein S5. The interaction surface between S4 and S5 is involved in control of translational fidelity.

One of the primary rRNA binding proteins, it binds directly to 16S rRNA where it nucleates assembly of the body of the 30S subunit. In terms of biological role, with S5 and S12 plays an important role in translational accuracy. This Marinobacter nauticus (strain ATCC 700491 / DSM 11845 / VT8) (Marinobacter aquaeolei) protein is Small ribosomal subunit protein uS4.